A 342-amino-acid chain; its full sequence is MTEAIKTDVLIVGAGPCGLFAVFELGLLDIKVHLVDILDKVGGQCAELYPEKPIYDIPGIPMITGHGLTESLMEQIKPFNPTIHLNEMIESVEKIGDPEFRVITNAGTVFECKVLVVAAGGGSFQPKRPPVPGVEAYEGKSVHYAVRKMEEFRGKDIVIVGGGDSALDWTLNLNPICKSMTLVHRRDDFRGAPHSVEQMRQLVASGKLDLKIGQITELQGDNGQLSGATIKLNDNSVAQIKCDAMLPFFGLTMKLGPVANWGLQLENNLIPVDTGTFETNVPGIFAIGDINTYPGKLKLILSGFHEGALMAQKAVKYVYPDKRVVFQYTTSSTNLQKKLGVN.

FAD contacts are provided by cysteine 17, aspartate 36, glutamine 44, tyrosine 49, isoleucine 89, phenylalanine 124, aspartate 289, and threonine 330.

This sequence belongs to the ferredoxin--NADP reductase type 2 family. Homodimer. Requires FAD as cofactor.

The catalysed reaction is 2 reduced [2Fe-2S]-[ferredoxin] + NADP(+) + H(+) = 2 oxidized [2Fe-2S]-[ferredoxin] + NADPH. This is Ferredoxin--NADP reductase from Rhodopseudomonas palustris (strain BisB5).